Reading from the N-terminus, the 445-residue chain is Sporulation protein YkvU (445 aa).

The next 12 helical transmembrane spans lie at 7 to 29, 39 to 61, 82 to 104, 109 to 131, 144 to 166, 172 to 194, 237 to 259, 269 to 291, 312 to 334, 349 to 371, 376 to 395, and 400 to 422; these read GIIL…NMIL, GLYM…ELPI, AFRM…LPFI, TYHP…TSIA, IAIA…FQWY, MAVL…YLYS, VNAI…GTAA, VAVT…MIPS, IFIT…GPLT, LLWP…IGMG, AFYH…YVLG, and LQML…LHYA.

The protein localises to the forespore membrane. In Bacillus subtilis (strain 168), this protein is Sporulation protein YkvU (ykvU).